An 89-amino-acid polypeptide reads, in one-letter code: Putative protein T-ENOL (89 aa).

Disordered regions lie at residues 1–31 (MASTSARSGDKKDTWPIQAAASLGGGQKASL) and 54–89 (RSHMNPMPDKEKQTKDQGTQISRHVFFTKTRGTDTR).

As to expression, specifically expressed in testis (at protein level).

This Rattus norvegicus (Rat) protein is Putative protein T-ENOL.